Here is a 274-residue protein sequence, read N- to C-terminus: Putative pyruvate, phosphate dikinase regulatory protein (274 aa).

151–158 (GVSRTSKT) provides a ligand contact to ADP.

It belongs to the pyruvate, phosphate/water dikinase regulatory protein family. PDRP subfamily.

The enzyme catalyses N(tele)-phospho-L-histidyl/L-threonyl-[pyruvate, phosphate dikinase] + ADP = N(tele)-phospho-L-histidyl/O-phospho-L-threonyl-[pyruvate, phosphate dikinase] + AMP + H(+). It carries out the reaction N(tele)-phospho-L-histidyl/O-phospho-L-threonyl-[pyruvate, phosphate dikinase] + phosphate + H(+) = N(tele)-phospho-L-histidyl/L-threonyl-[pyruvate, phosphate dikinase] + diphosphate. In terms of biological role, bifunctional serine/threonine kinase and phosphorylase involved in the regulation of the pyruvate, phosphate dikinase (PPDK) by catalyzing its phosphorylation/dephosphorylation. In Pelagibacter ubique (strain HTCC1062), this protein is Putative pyruvate, phosphate dikinase regulatory protein.